We begin with the raw amino-acid sequence, 131 residues long: Colicin-N immunity protein (131 aa).

2 helical membrane passes run 66 to 84 (ILTPFTILYISMIYCFLLT) and 104 to 124 (VFVFFLYNTIYWDIYIHIFVL).

Its subcellular location is the cell membrane. This chain is Colicin-N immunity protein (cni), found in Escherichia coli.